A 342-amino-acid polypeptide reads, in one-letter code: S-adenosylmethionine:tRNA ribosyltransferase-isomerase (342 aa).

The protein belongs to the QueA family. Monomer.

Its subcellular location is the cytoplasm. It catalyses the reaction 7-aminomethyl-7-carbaguanosine(34) in tRNA + S-adenosyl-L-methionine = epoxyqueuosine(34) in tRNA + adenine + L-methionine + 2 H(+). The protein operates within tRNA modification; tRNA-queuosine biosynthesis. Its function is as follows. Transfers and isomerizes the ribose moiety from AdoMet to the 7-aminomethyl group of 7-deazaguanine (preQ1-tRNA) to give epoxyqueuosine (oQ-tRNA). This chain is S-adenosylmethionine:tRNA ribosyltransferase-isomerase, found in Streptococcus pyogenes serotype M3 (strain ATCC BAA-595 / MGAS315).